The primary structure comprises 142 residues: Large ribosomal subunit protein uL13 (142 aa).

This sequence belongs to the universal ribosomal protein uL13 family. In terms of assembly, part of the 50S ribosomal subunit.

Functionally, this protein is one of the early assembly proteins of the 50S ribosomal subunit, although it is not seen to bind rRNA by itself. It is important during the early stages of 50S assembly. The protein is Large ribosomal subunit protein uL13 of Methylococcus capsulatus (strain ATCC 33009 / NCIMB 11132 / Bath).